The primary structure comprises 124 residues: Protein CYSTEINE-RICH TRANSMEMBRANE MODULE 10 (124 aa).

The tract at residues 1–103 (MSYQDPQHPV…PKNKKDKKDS (103 aa)) is disordered. Composition is skewed to pro residues over residues 27 to 40 (AGYP…PPQY) and 65 to 88 (GYPP…PPPH). A helical transmembrane segment spans residues 101–118 (KDSGGFMEGCLAMLCCCV).

Belongs to the CYSTM1 family. Heterodimers. Interacts with CYSTM7 and WIH1/CYSTM13. Mostly expressed in stems and,at low levels, in stems, roots, flowers, siliques and leaves.

The protein localises to the cell membrane. Its subcellular location is the cytoplasm. Its function is as follows. Involved in resistance to abiotic stress. The polypeptide is Protein CYSTEINE-RICH TRANSMEMBRANE MODULE 10 (Arabidopsis thaliana (Mouse-ear cress)).